The chain runs to 413 residues: Type IV pilus assembly protein TapC (413 aa).

The next 4 helical transmembrane spans lie at 180–200 (YPAMVILVAIVVTSILLLFVI), 227–247 (FMQHWWYVIFGGTAFAIFLYV), 286–306 (LSTTFSAGIPLVDALISAAGA), and 386–406 (IMVVLGVLVGGMVVAMYLPIF).

The protein belongs to the GSP F family.

The protein localises to the cell inner membrane. Involved in the translocation of the type IV pilin. In Aeromonas hydrophila, this protein is Type IV pilus assembly protein TapC (tapC).